Reading from the N-terminus, the 600-residue chain is Aspartate--tRNA(Asp/Asn) ligase (600 aa).

Position 181 (E181) interacts with L-aspartate. An aspartate region spans residues 205 to 208 (QQFK). R227 contacts L-aspartate. ATP is bound by residues 227–229 (RDE) and Q236. H455 lines the L-aspartate pocket. E489 contacts ATP. L-aspartate is bound at residue R496. 541 to 544 (GIDR) is an ATP binding site.

The protein belongs to the class-II aminoacyl-tRNA synthetase family. Type 1 subfamily. Homodimer.

It localises to the cytoplasm. The catalysed reaction is tRNA(Asx) + L-aspartate + ATP = L-aspartyl-tRNA(Asx) + AMP + diphosphate. Functionally, aspartyl-tRNA synthetase with relaxed tRNA specificity since it is able to aspartylate not only its cognate tRNA(Asp) but also tRNA(Asn). Reaction proceeds in two steps: L-aspartate is first activated by ATP to form Asp-AMP and then transferred to the acceptor end of tRNA(Asp/Asn). The chain is Aspartate--tRNA(Asp/Asn) ligase from Rubrobacter xylanophilus (strain DSM 9941 / JCM 11954 / NBRC 16129 / PRD-1).